Reading from the N-terminus, the 273-residue chain is Large ribosomal subunit protein uL2cz/uL2cy (273 aa).

Disordered regions lie at residues 1–22 and 223–254; these read MAIH…DSQV and MNPV…PALG.

It belongs to the universal ribosomal protein uL2 family. As to quaternary structure, part of the 50S ribosomal subunit.

It is found in the plastid. The protein resides in the chloroplast. The sequence is that of Large ribosomal subunit protein uL2cz/uL2cy (rpl2-A) from Drimys granadensis.